The chain runs to 295 residues: Ribosomal protein L11 methyltransferase (295 aa).

Threonine 145, glycine 166, aspartate 188, and asparagine 230 together coordinate S-adenosyl-L-methionine.

This sequence belongs to the methyltransferase superfamily. PrmA family.

The protein localises to the cytoplasm. The enzyme catalyses L-lysyl-[protein] + 3 S-adenosyl-L-methionine = N(6),N(6),N(6)-trimethyl-L-lysyl-[protein] + 3 S-adenosyl-L-homocysteine + 3 H(+). Its function is as follows. Methylates ribosomal protein L11. This Haemophilus influenzae (strain PittEE) protein is Ribosomal protein L11 methyltransferase.